Consider the following 332-residue polypeptide: GTP 3',8-cyclase (332 aa).

In terms of domain architecture, Radical SAM core spans 9-234; the sequence is TFGRRISYLR…DSDHRTGGPS (226 aa). Arg18 contributes to the GTP binding site. Residues Cys25 and Cys29 each contribute to the [4Fe-4S] cluster site. Tyr31 is an S-adenosyl-L-methionine binding site. Cys32 provides a ligand contact to [4Fe-4S] cluster. Residue Arg67 participates in GTP binding. Gly71 contributes to the S-adenosyl-L-methionine binding site. Residue Thr100 coordinates GTP. Ser124 serves as a coordination point for S-adenosyl-L-methionine. Lys160 is a binding site for GTP. Residue Met194 coordinates S-adenosyl-L-methionine. Residues Cys257 and Cys260 each coordinate [4Fe-4S] cluster. GTP is bound at residue 262–264; the sequence is RVR. Cys274 lines the [4Fe-4S] cluster pocket.

This sequence belongs to the radical SAM superfamily. MoaA family. As to quaternary structure, monomer and homodimer. The cofactor is [4Fe-4S] cluster.

It catalyses the reaction GTP + AH2 + S-adenosyl-L-methionine = (8S)-3',8-cyclo-7,8-dihydroguanosine 5'-triphosphate + 5'-deoxyadenosine + L-methionine + A + H(+). The protein operates within cofactor biosynthesis; molybdopterin biosynthesis. Catalyzes the cyclization of GTP to (8S)-3',8-cyclo-7,8-dihydroguanosine 5'-triphosphate. This chain is GTP 3',8-cyclase, found in Erythrobacter litoralis (strain HTCC2594).